A 312-amino-acid chain; its full sequence is Phosphoribosylglycinamide formyltransferase, chloroplastic (312 aa).

The N-terminal 73 residues, 1–73, are a transit peptide targeting the chloroplast; it reads MEAQQIISRF…EVCSSSWRIW (73 aa). 109–111 is a binding site for N(1)-(5-phospho-beta-D-ribosyl)glycinamide; the sequence is GSN. (6R)-10-formyltetrahydrofolate is bound by residues Lys162, 187–190, and Asn204; that span reads LKLI. The active-site Proton donor is His206. Asp247 contributes to the (6R)-10-formyltetrahydrofolate binding site. A N(1)-(5-phospho-beta-D-ribosyl)glycinamide-binding site is contributed by Glu276.

It belongs to the GART family.

Its subcellular location is the plastid. The protein localises to the chloroplast. The catalysed reaction is N(1)-(5-phospho-beta-D-ribosyl)glycinamide + (6R)-10-formyltetrahydrofolate = N(2)-formyl-N(1)-(5-phospho-beta-D-ribosyl)glycinamide + (6S)-5,6,7,8-tetrahydrofolate + H(+). It participates in purine metabolism; IMP biosynthesis via de novo pathway; N(2)-formyl-N(1)-(5-phospho-D-ribosyl)glycinamide from N(1)-(5-phospho-D-ribosyl)glycinamide (10-formyl THF route): step 1/1. In Vigna unguiculata (Cowpea), this protein is Phosphoribosylglycinamide formyltransferase, chloroplastic (PUR3).